The following is a 364-amino-acid chain: MSHNTFGHLFRVTTWGESHGAALGCVIDGCPPGIAFTLTEIQAYLNKRRPGHSEYTTQRRELDQVEILSGVVSQNDGKALVTTGTPISMFIRNVDHHSEDYNAIMHKYRPGHADYTYDVKYGIRDHRGGGRASARETVVRVAAGALARKIVPGLIVRGAVTAIGPHNIDRDRWDWSEVDKNPFFSPDAQAACVFANYISQLCKTGSSVGAIVEIVAENVPAGLGAPVYAKLDQDIASFLMSINAVKGIEIGDGFAAAHLTGEENADEMRMGSDGKPVFLSNHAGGILGGISNGQPIVARFAVKPTSSILTPSRSIDIEGNDVNVMTKGRHDPCVGIRAVPVGEAMVACAIADHYLRHRGQVGCI.

Residue R48 coordinates NADP(+). FMN contacts are provided by residues 131–133 (RAS), 243–244 (NA), G288, 303–307 (KPTSS), and R329.

Belongs to the chorismate synthase family. As to quaternary structure, homotetramer. FMNH2 serves as cofactor.

The enzyme catalyses 5-O-(1-carboxyvinyl)-3-phosphoshikimate = chorismate + phosphate. Its pathway is metabolic intermediate biosynthesis; chorismate biosynthesis; chorismate from D-erythrose 4-phosphate and phosphoenolpyruvate: step 7/7. Its function is as follows. Catalyzes the anti-1,4-elimination of the C-3 phosphate and the C-6 proR hydrogen from 5-enolpyruvylshikimate-3-phosphate (EPSP) to yield chorismate, which is the branch point compound that serves as the starting substrate for the three terminal pathways of aromatic amino acid biosynthesis. This reaction introduces a second double bond into the aromatic ring system. This chain is Chorismate synthase, found in Bartonella bacilliformis (strain ATCC 35685 / KC583 / Herrer 020/F12,63).